The following is a 453-amino-acid chain: Histidine--tRNA ligase (453 aa).

The protein belongs to the class-II aminoacyl-tRNA synthetase family. Homodimer.

It localises to the cytoplasm. It catalyses the reaction tRNA(His) + L-histidine + ATP = L-histidyl-tRNA(His) + AMP + diphosphate + H(+). This is Histidine--tRNA ligase from Cytophaga hutchinsonii (strain ATCC 33406 / DSM 1761 / CIP 103989 / NBRC 15051 / NCIMB 9469 / D465).